The sequence spans 101 residues: Small ribosomal subunit protein bS18c (101 aa).

Belongs to the bacterial ribosomal protein bS18 family. In terms of assembly, part of the 30S ribosomal subunit.

Its subcellular location is the plastid. It is found in the chloroplast. In Lactuca sativa (Garden lettuce), this protein is Small ribosomal subunit protein bS18c.